The chain runs to 200 residues: MYRKYSDGIIEVITGPMYSGKSEELIKRIKILQFANIKTLIVKQKFDTRFSHNEIVSRSGTKLNTIVASNVEEIKKVWNNTYKAIAIDEVQFFDKDIINYIDELASKGIRVIISGLDTDFARKPFGIMPELLAIADDVLKLKAVCFSCKNAGTHTFRITNDKDQKLLGDTESYQARCRKCHLEGEEQKIQMDNLKLNLSL.

ATP is bound by residues 15–22 (GPMYSGKS) and 88–91 (DEVQ). The active-site Proton acceptor is the glutamate 89. Positions 145, 148, 177, and 180 each coordinate Zn(2+).

Belongs to the thymidine kinase family. Homotetramer.

The protein localises to the cytoplasm. The catalysed reaction is thymidine + ATP = dTMP + ADP + H(+). In Mycoplasma mobile (strain ATCC 43663 / 163K / NCTC 11711) (Mesomycoplasma mobile), this protein is Thymidine kinase.